Here is a 419-residue protein sequence, read N- to C-terminus: UDP-N-acetylglucosamine 1-carboxyvinyltransferase (419 aa).

22-23 contacts phosphoenolpyruvate; sequence KN. R91 provides a ligand contact to UDP-N-acetyl-alpha-D-glucosamine. C115 functions as the Proton donor in the catalytic mechanism. A 2-(S-cysteinyl)pyruvic acid O-phosphothioketal modification is found at C115. Residues 120 to 124, 160 to 163, D305, and V327 contribute to the UDP-N-acetyl-alpha-D-glucosamine site; these read RPVDL and KVSV.

This sequence belongs to the EPSP synthase family. MurA subfamily.

The protein localises to the cytoplasm. The enzyme catalyses phosphoenolpyruvate + UDP-N-acetyl-alpha-D-glucosamine = UDP-N-acetyl-3-O-(1-carboxyvinyl)-alpha-D-glucosamine + phosphate. Its pathway is cell wall biogenesis; peptidoglycan biosynthesis. In terms of biological role, cell wall formation. Adds enolpyruvyl to UDP-N-acetylglucosamine. This is UDP-N-acetylglucosamine 1-carboxyvinyltransferase from Salmonella gallinarum (strain 287/91 / NCTC 13346).